A 1106-amino-acid polypeptide reads, in one-letter code: Carbamoyl phosphate synthase large chain (1106 aa).

The carboxyphosphate synthetic domain stretch occupies residues 1-402 (MPKREDLKSV…ALQKALRSLE (402 aa)). ATP contacts are provided by arginine 129, arginine 169, glycine 175, glycine 176, glutamate 208, isoleucine 210, glutamate 215, glycine 241, valine 242, histidine 243, glutamine 285, and glutamate 299. One can recognise an ATP-grasp 1 domain in the interval 133–328 (KGVVERCGAE…IAKIATKLSL (196 aa)). Positions 285, 299, and 301 each coordinate Mg(2+). Mn(2+)-binding residues include glutamine 285, glutamate 299, and asparagine 301. Residues 403–546 (QKGSQLDFGS…YHYSSYDQED (144 aa)) form an oligomerization domain region. Residues 547 to 956 (EIALHEKPSV…AFAKSQAAAN (410 aa)) form a carbamoyl phosphate synthetic domain region. The ATP-grasp 2 domain occupies 677–868 (ARVLDIAGLI…LAKAAALIGT (192 aa)). Positions 713, 752, 754, 759, 784, 785, 786, 787, 827, and 839 each coordinate ATP. Positions 827, 839, and 841 each coordinate Mg(2+). 3 residues coordinate Mn(2+): glutamine 827, glutamate 839, and asparagine 841. In terms of domain architecture, MGS-like spans 957 to 1106 (NALPTEGKVF…EALLEAAANV (150 aa)). The tract at residues 957 to 1106 (NALPTEGKVF…EALLEAAANV (150 aa)) is allosteric domain.

The protein belongs to the CarB family. In terms of assembly, composed of two chains; the small (or glutamine) chain promotes the hydrolysis of glutamine to ammonia, which is used by the large (or ammonia) chain to synthesize carbamoyl phosphate. Tetramer of heterodimers (alpha,beta)4. It depends on Mg(2+) as a cofactor. Mn(2+) serves as cofactor.

It carries out the reaction hydrogencarbonate + L-glutamine + 2 ATP + H2O = carbamoyl phosphate + L-glutamate + 2 ADP + phosphate + 2 H(+). The enzyme catalyses hydrogencarbonate + NH4(+) + 2 ATP = carbamoyl phosphate + 2 ADP + phosphate + 2 H(+). The protein operates within amino-acid biosynthesis; L-arginine biosynthesis; carbamoyl phosphate from bicarbonate: step 1/1. It functions in the pathway pyrimidine metabolism; UMP biosynthesis via de novo pathway; (S)-dihydroorotate from bicarbonate: step 1/3. Its function is as follows. Large subunit of the glutamine-dependent carbamoyl phosphate synthetase (CPSase). CPSase catalyzes the formation of carbamoyl phosphate from the ammonia moiety of glutamine, carbonate, and phosphate donated by ATP, constituting the first step of 2 biosynthetic pathways, one leading to arginine and/or urea and the other to pyrimidine nucleotides. The large subunit (synthetase) binds the substrates ammonia (free or transferred from glutamine from the small subunit), hydrogencarbonate and ATP and carries out an ATP-coupled ligase reaction, activating hydrogencarbonate by forming carboxy phosphate which reacts with ammonia to form carbamoyl phosphate. The sequence is that of Carbamoyl phosphate synthase large chain from Renibacterium salmoninarum (strain ATCC 33209 / DSM 20767 / JCM 11484 / NBRC 15589 / NCIMB 2235).